Consider the following 317-residue polypeptide: HTH-type transcriptional regulator MetR (317 aa).

Residues 1–59 (MIEVKHLKTLQALRNCGSLAAAAATLHQTQSALSHQFSDLEQRLGFRLFVRKSQPLRFT) enclose the HTH lysR-type domain. A DNA-binding region (H-T-H motif) is located at residues 19–38 (LAAAAATLHQTQSALSHQFS).

This sequence belongs to the LysR transcriptional regulatory family.

The protein resides in the cytoplasm. In terms of biological role, control of the last step in methionine biosynthesis; MetR is a positive activator of the metA, metE and metH genes. It is also a negative regulator of its own expression. This chain is HTH-type transcriptional regulator MetR (metR), found in Escherichia coli O157:H7.